The primary structure comprises 239 residues: Regulator protein TubY (239 aa).

Residues 138-239 (INNTISQQLS…KGFFGKLFKR (102 aa)) form a required to bind TubZ region. The stretch at 150 to 229 (LNAHNEALEQ…KQQNEEQNNK (80 aa)) forms a coiled coil. The span at 217-228 (EERKQQNEEQNN) shows a compositional bias: basic and acidic residues. Positions 217–239 (EERKQQNEEQNNKKGFFGKLFKR) are disordered. The segment covering 229-239 (KKGFFGKLFKR) has biased composition (low complexity).

As to quaternary structure, forms homooctamers in the absence of the last 13 residues; the coiled coil domain is required for oligomerization. In the presence of GTP and Mg(2+) binds to TubZ and also to TubZ-TubR-tubC DNA; the latter is reshaped from large filament bundles to rings of 30-40 nm diameter.

It localises to the host cytoplasm. In terms of biological role, a probable TubZ filament regulator that is part of the type III partition system presumably used to ensure correct segregation of this bacteriophage. Binds to TubZ in the presence of GTP and Mg(2+), and to TubZ-TubR-tubC (tubC is the centromere-like site). The latter complex is reshaped from large bundles to rings by TubY. Modifies TubZ filaments formed in the presence of GDP to make them thinner and more flexible; in GDP and lacking the last 8 residues of TubZ makes rings without TubT-tubC. In Clostridium botulinum C (Clostridium botulinum C bacteriophage), this protein is Regulator protein TubY.